Here is a 1227-residue protein sequence, read N- to C-terminus: Protein transport protein Sec31A (1227 aa).

WD repeat units follow at residues 4-47 (KEID…EIFE), 64-111 (SSAH…AGDT), 120-160 (KHTG…TPMT), 166-206 (QPLE…PIIK), 209-254 (DHNN…SPLR), 258-298 (SHTR…VLYE), and 301-342 (TNMQ…DGLR). A WD 8; interaction with SEC13 repeat occupies 397–430 (SFSFGGKLVTFENAKPQQQPGIDQQPQHHYVYVS). Disordered regions lie at residues 804 to 875 (EAIK…YSQA), 905 to 1008 (QPVA…GWND), and 1040 to 1075 (ADPQ…LGPY). The segment covering 905-924 (QPVAAPASASYPSPASNTNP) has biased composition (low complexity). The span at 925–945 (PYLPAAQPVPSPLYPGQPQPS) shows a compositional bias: pro residues. Residues 995 to 1006 (PASQRTGPQNGW) show a composition bias toward polar residues. Residues 1040–1049 (ADPQAQMQQP) are compositionally biased toward low complexity. Residues 1057–1069 (PSFQPQQLSTGQQ) show a composition bias toward polar residues.

Belongs to the WD repeat SEC31 family. In terms of assembly, COPII is composed of at least 5 proteins: the SEC23/24 complex, the SEC13/31 complex and SAR1. SEC13 and SEC31 make a 2:2 tetramer that forms the edge element of the COPII outer coat. The tetramer self-assembles in multiple copies to form the complete polyhedral cage. Interacts (via WD 8) with SEC13.

Its subcellular location is the cytoplasm. It is found in the cytoplasmic vesicle. It localises to the COPII-coated vesicle membrane. The protein localises to the endoplasmic reticulum membrane. Its function is as follows. Component of the coat protein complex II (COPII) which promotes the formation of transport vesicles from the endoplasmic reticulum (ER). The coat has two main functions, the physical deformation of the endoplasmic reticulum membrane into vesicles and the selection of cargo molecules. The protein is Protein transport protein Sec31A (SEC31A) of Gallus gallus (Chicken).